Consider the following 292-residue polypeptide: Ribosomal protein L11 methyltransferase (292 aa).

Thr143, Gly164, Asp186, and Asn228 together coordinate S-adenosyl-L-methionine.

Belongs to the methyltransferase superfamily. PrmA family.

The protein resides in the cytoplasm. The enzyme catalyses L-lysyl-[protein] + 3 S-adenosyl-L-methionine = N(6),N(6),N(6)-trimethyl-L-lysyl-[protein] + 3 S-adenosyl-L-homocysteine + 3 H(+). Methylates ribosomal protein L11. This chain is Ribosomal protein L11 methyltransferase, found in Aeromonas salmonicida (strain A449).